Reading from the N-terminus, the 165-residue chain is Transcription factor E (165 aa).

The region spanning asparagine 5–glutamate 87 is the HTH TFE/IIEalpha-type domain.

Belongs to the TFE family. As to quaternary structure, monomer. Interaction with RNA polymerase subunits RpoF and RpoE is necessary for Tfe stimulatory transcription activity. Able to interact with Tbp and RNA polymerase in the absence of DNA promoter. Interacts both with the preinitiation and elongation complexes.

Functionally, transcription factor that plays a role in the activation of archaeal genes transcribed by RNA polymerase. Facilitates transcription initiation by enhancing TATA-box recognition by TATA-box-binding protein (Tbp), and transcription factor B (Tfb) and RNA polymerase recruitment. Not absolutely required for transcription in vitro, but particularly important in cases where Tbp or Tfb function is not optimal. It dynamically alters the nucleic acid-binding properties of RNA polymerases by stabilizing the initiation complex and destabilizing elongation complexes. Seems to translocate with the RNA polymerase following initiation and acts by binding to the non template strand of the transcription bubble in elongation complexes. This chain is Transcription factor E, found in Methanococcoides burtonii (strain DSM 6242 / NBRC 107633 / OCM 468 / ACE-M).